The sequence spans 635 residues: Threonine--tRNA ligase (635 aa).

The TGS domain maps to 1 to 61 (MIKITLKDGK…HKDSSLEILT (61 aa)). The catalytic stretch occupies residues 242-532 (DHRKLGKELD…LIEQYAGAFP (291 aa)). Zn(2+) contacts are provided by Cys-333, His-384, and His-509.

This sequence belongs to the class-II aminoacyl-tRNA synthetase family. Homodimer. It depends on Zn(2+) as a cofactor.

It is found in the cytoplasm. The catalysed reaction is tRNA(Thr) + L-threonine + ATP = L-threonyl-tRNA(Thr) + AMP + diphosphate + H(+). Its function is as follows. Catalyzes the attachment of threonine to tRNA(Thr) in a two-step reaction: L-threonine is first activated by ATP to form Thr-AMP and then transferred to the acceptor end of tRNA(Thr). Also edits incorrectly charged L-seryl-tRNA(Thr). This chain is Threonine--tRNA ligase, found in Clostridium botulinum (strain Langeland / NCTC 10281 / Type F).